A 430-amino-acid chain; its full sequence is Probable ribosomal RNA small subunit methyltransferase B (430 aa).

Residues 246–252, Asp270, Asp299, and Asp318 each bind S-adenosyl-L-methionine; that span reads CAAPGSK. Residue Cys371 is the Nucleophile of the active site.

Belongs to the class I-like SAM-binding methyltransferase superfamily. RsmB/NOP family.

It is found in the cytoplasm. The enzyme catalyses cytidine(967) in 16S rRNA + S-adenosyl-L-methionine = 5-methylcytidine(967) in 16S rRNA + S-adenosyl-L-homocysteine + H(+). Specifically methylates the cytosine at position 967 (m5C967) of 16S rRNA. In Coxiella burnetii (strain RSA 493 / Nine Mile phase I), this protein is Probable ribosomal RNA small subunit methyltransferase B.